Here is a 215-residue protein sequence, read N- to C-terminus: Translation initiation factor IF-3 (215 aa).

Positions 159 to 215 (SAEVQQPPKREGRNMIMFLGPRKTPLQKDKPEQATKAERTLPIAKPPGKTAAPAAAN) are disordered. A compositionally biased stretch (basic and acidic residues) spans 184–197 (LQKDKPEQATKAER). Residues 200–215 (PIAKPPGKTAAPAAAN) show a composition bias toward low complexity.

Belongs to the IF-3 family. In terms of assembly, monomer.

The protein resides in the cytoplasm. Its function is as follows. IF-3 binds to the 30S ribosomal subunit and shifts the equilibrium between 70S ribosomes and their 50S and 30S subunits in favor of the free subunits, thus enhancing the availability of 30S subunits on which protein synthesis initiation begins. In Synechococcus sp. (strain RCC307), this protein is Translation initiation factor IF-3.